Reading from the N-terminus, the 271-residue chain is Formamidopyrimidine-DNA glycosylase (271 aa).

The active-site Schiff-base intermediate with DNA is Pro-2. The active-site Proton donor is the Glu-3. Lys-58 serves as the catalytic Proton donor; for beta-elimination activity. Positions 91, 110, and 152 each coordinate DNA. The FPG-type zinc finger occupies Arg-237–Arg-271. Residue Arg-261 is the Proton donor; for delta-elimination activity of the active site.

This sequence belongs to the FPG family. In terms of assembly, monomer. The cofactor is Zn(2+).

It catalyses the reaction Hydrolysis of DNA containing ring-opened 7-methylguanine residues, releasing 2,6-diamino-4-hydroxy-5-(N-methyl)formamidopyrimidine.. The enzyme catalyses 2'-deoxyribonucleotide-(2'-deoxyribose 5'-phosphate)-2'-deoxyribonucleotide-DNA = a 3'-end 2'-deoxyribonucleotide-(2,3-dehydro-2,3-deoxyribose 5'-phosphate)-DNA + a 5'-end 5'-phospho-2'-deoxyribonucleoside-DNA + H(+). Functionally, involved in base excision repair of DNA damaged by oxidation or by mutagenic agents. Acts as a DNA glycosylase that recognizes and removes damaged bases. Has a preference for oxidized purines, such as 7,8-dihydro-8-oxoguanine (8-oxoG). Has AP (apurinic/apyrimidinic) lyase activity and introduces nicks in the DNA strand. Cleaves the DNA backbone by beta-delta elimination to generate a single-strand break at the site of the removed base with both 3'- and 5'-phosphates. The sequence is that of Formamidopyrimidine-DNA glycosylase from Methylococcus capsulatus (strain ATCC 33009 / NCIMB 11132 / Bath).